The primary structure comprises 425 residues: uncharacterized protein (425 aa).

To K.pneumoniae SorE.

This is an uncharacterized protein from Escherichia coli (strain K12).